A 429-amino-acid chain; its full sequence is Adenylosuccinate synthetase (429 aa).

Residues 12-18 (GDEGKGK) and 40-42 (GHT) each bind GTP. Asp-13 acts as the Proton acceptor in catalysis. Mg(2+) contacts are provided by Asp-13 and Gly-40. Residues 13–16 (DEGK), 38–41 (NAGH), Thr-128, Arg-142, Gln-223, Thr-238, and Arg-302 contribute to the IMP site. Residue His-41 is the Proton donor of the active site. 298–304 (VNTGRKR) is a binding site for substrate. Residues Arg-304, 330–332 (KLD), and 412–414 (GVG) contribute to the GTP site.

It belongs to the adenylosuccinate synthetase family. Homodimer. It depends on Mg(2+) as a cofactor.

It localises to the cytoplasm. It carries out the reaction IMP + L-aspartate + GTP = N(6)-(1,2-dicarboxyethyl)-AMP + GDP + phosphate + 2 H(+). The protein operates within purine metabolism; AMP biosynthesis via de novo pathway; AMP from IMP: step 1/2. Functionally, plays an important role in the de novo pathway of purine nucleotide biosynthesis. Catalyzes the first committed step in the biosynthesis of AMP from IMP. This is Adenylosuccinate synthetase from Corynebacterium efficiens (strain DSM 44549 / YS-314 / AJ 12310 / JCM 11189 / NBRC 100395).